Here is a 347-residue protein sequence, read N- to C-terminus: MLKILWTYILFLLFISASARAEKPWYFDAIGLTETTMSLTDKNTPVVVSVVDSGVAFIGGLSDSEFAKFSFTQDGSPFPVKKSEALYIHGTAMASLIASRYGIYGVYPHALISSRRVIPDGVQDSWIRAIESIMSNVFLAPGEEKIINISGGQKGVASASVWTELLSRMGRNNDRLIVAAVGNDGADIRKLSAQQRIWPAAYHPVSSVNKKQDPVIRVAALAQYRKGETPVLHGGGITGSRFGNNWVDIAAPGQNITFLRPDAKTGTGSGTSEATAIVSGVLAAMTSCNPRATATELKRTLLESADKYPSLVDKVTEGRVLNAEKAISMFCKKNYIPVRQGRMSEEL.

An N-terminal signal peptide occupies residues 1 to 21 (MLKILWTYILFLLFISASARA). One can recognise a Peptidase S8 domain in the interval 24–327 (PWYFDAIGLT…GRVLNAEKAI (304 aa)). Residues aspartate 52, histidine 89, and serine 272 each act as charge relay system in the active site. Residues cysteine 288 and cysteine 331 are joined by a disulfide bond. The interval 322 to 347 (NAEKAISMFCKKNYIPVRQGRMSEEL) is A2 domain. Residues 344–347 (SEEL) carry the Prevents secretion from ER motif.

The protein belongs to the peptidase S8 family. In terms of assembly, forms a complex with SubB with the stoichiometry SubA1:SubB5 (called SubAB5).

The protein localises to the secreted. The protein resides in the host cytoplasm. It is found in the host cytosol. Its subcellular location is the host endoplasmic reticulum lumen. In terms of biological role, protease subunit of subtilase cytotoxin SubAB5. An endoprotease specific for host endoplasmic reticulum (ER) chaperone BiP/HSPA5, has no activity on human HSP70 or HSPA8. Cleaves between 'Leu-416' and 'Leu-417' of BiP/HSPA5 in the hinge between BiP's ATPase and protein-binding domains. This induces host ER stress response and eventual cell death. Culture supernatant of E.coli expressing both subA and subB are toxic for Vero cells (African green monkey kidney cell line), Chinese hamster ovary cells and Hct-8 cells (human colonic epithelial cell line); the subunits are not toxic individually. Purified SubAB5 is highly toxic, &lt;0.1 pg is able to kill at least 50% of 30'000 Vero cells in a microtiter plate assay after 3 days; no cytotoxicity is seen at 24 hours. Preabsorption with cells expressing a ganglioside GM2 mimic reduced cytotoxicity of SubAB5 by 93% in the Vero cytotoxicity assay. Intraperitoneal injection of 200 ng of purified SubAB5 kills mice; the higher the dose the faster the mice die. Animals injected intraperitoneally with purified SubAB5 have microvascular thrombi in the brain and other organs, including the renal tubules and glomeruli. Injection induces an unfolded response in mice. Mice fed E.coli cells expressing cloned SubAB5 experience drastic weight loss and appear ill and lethargic. Protein synthesis in Vero cells is transiently inhibited by SubAB5; both subunits are required for this effect. Inhibition of protein synthesis is prevented by brefeldin A; cells are arrested in the G1 phase. SubAB5 at 100 ng/ml induced caspase-dependent apoptosis in Vero cells through mitochondrial membrane damage. The protein is Subtilase cytotoxin subunit A of Escherichia coli.